A 395-amino-acid polypeptide reads, in one-letter code: S-adenosylmethionine synthase (395 aa).

Position 15 (H15) interacts with ATP. D17 lines the Mg(2+) pocket. E43 is a binding site for K(+). The L-methionine site is built by E56 and Q99. The segment at 99–109 is flexible loop; sequence QSPEIAQGVDR. ATP-binding positions include 164–166, 230–231, D239, 245–246, A262, and K266; these read DAK, RF, and RK. D239 contacts L-methionine. L-methionine is bound at residue K270.

This sequence belongs to the AdoMet synthase family. Homotetramer; dimer of dimers. It depends on Mg(2+) as a cofactor. K(+) is required as a cofactor.

The protein localises to the cytoplasm. It carries out the reaction L-methionine + ATP + H2O = S-adenosyl-L-methionine + phosphate + diphosphate. The protein operates within amino-acid biosynthesis; S-adenosyl-L-methionine biosynthesis; S-adenosyl-L-methionine from L-methionine: step 1/1. Functionally, catalyzes the formation of S-adenosylmethionine (AdoMet) from methionine and ATP. The overall synthetic reaction is composed of two sequential steps, AdoMet formation and the subsequent tripolyphosphate hydrolysis which occurs prior to release of AdoMet from the enzyme. The sequence is that of S-adenosylmethionine synthase from Colwellia psychrerythraea (strain 34H / ATCC BAA-681) (Vibrio psychroerythus).